Consider the following 206-residue polypeptide: uncharacterized protein (206 aa).

The interval Glu81–Arg132 is disordered. Over residues Glu82–Ser96 the composition is skewed to low complexity. Basic and acidic residues predominate over residues Ser103–Pro123. The chain crosses the membrane as a helical span at residues Tyr150 to Ile166.

Its subcellular location is the membrane. This is an uncharacterized protein from Dictyostelium discoideum (Social amoeba).